A 163-amino-acid chain; its full sequence is uncharacterized protein (163 aa).

Expressed in keratinocytes.

This is an uncharacterized protein from Homo sapiens (Human).